A 241-amino-acid chain; its full sequence is Triosephosphate isomerase (241 aa).

9–11 (NWK) contributes to the substrate binding site. Histidine 96 (electrophile) is an active-site residue. Glutamate 165 acts as the Proton acceptor in catalysis. Substrate contacts are provided by residues glycine 171, serine 204, and 225 to 226 (GG).

The protein belongs to the triosephosphate isomerase family. In terms of assembly, homodimer.

It localises to the cytoplasm. The enzyme catalyses D-glyceraldehyde 3-phosphate = dihydroxyacetone phosphate. It participates in carbohydrate biosynthesis; gluconeogenesis. Its pathway is carbohydrate degradation; glycolysis; D-glyceraldehyde 3-phosphate from glycerone phosphate: step 1/1. In terms of biological role, involved in the gluconeogenesis. Catalyzes stereospecifically the conversion of dihydroxyacetone phosphate (DHAP) to D-glyceraldehyde-3-phosphate (G3P). The polypeptide is Triosephosphate isomerase (Trichodesmium erythraeum (strain IMS101)).